The chain runs to 270 residues: Putative pyruvate, phosphate dikinase regulatory protein (270 aa).

Position 148–155 (148–155 (GISRTSKT)) interacts with ADP.

Belongs to the pyruvate, phosphate/water dikinase regulatory protein family. PDRP subfamily.

It catalyses the reaction N(tele)-phospho-L-histidyl/L-threonyl-[pyruvate, phosphate dikinase] + ADP = N(tele)-phospho-L-histidyl/O-phospho-L-threonyl-[pyruvate, phosphate dikinase] + AMP + H(+). The enzyme catalyses N(tele)-phospho-L-histidyl/O-phospho-L-threonyl-[pyruvate, phosphate dikinase] + phosphate + H(+) = N(tele)-phospho-L-histidyl/L-threonyl-[pyruvate, phosphate dikinase] + diphosphate. Bifunctional serine/threonine kinase and phosphorylase involved in the regulation of the pyruvate, phosphate dikinase (PPDK) by catalyzing its phosphorylation/dephosphorylation. The protein is Putative pyruvate, phosphate dikinase regulatory protein of Bacillus cereus (strain 03BB102).